A 467-amino-acid polypeptide reads, in one-letter code: Dimethylamine methyltransferase MtbB3 (467 aa).

Position 356 (Pyl-356) is a non-standard amino acid, pyrrolysine.

The protein belongs to the dimethylamine methyltransferase family.

It carries out the reaction Co(I)-[dimethylamine-specific corrinoid protein] + dimethylamine + H(+) = methyl-Co(III)-[dimethylamine-specific corrinoid protein] + methylamine. It participates in one-carbon metabolism; methanogenesis from dimethylamine. Catalyzes the transfer of a methyl group from dimethylamine to the corrinoid cofactor of MtbC. This is Dimethylamine methyltransferase MtbB3 (mtbB3) from Methanosarcina acetivorans (strain ATCC 35395 / DSM 2834 / JCM 12185 / C2A).